Here is a 246-residue protein sequence, read N- to C-terminus: Ly6/PLAUR domain-containing protein 4 (246 aa).

The signal sequence occupies residues M1 to A26. Residue N117 is glycosylated (N-linked (GlcNAc...) asparagine). The 82-residue stretch at C142 to V223 folds into the UPAR/Ly6 domain. A225 is lipidated: GPI-anchor amidated alanine. A propeptide spans G226–D246 (removed in mature form).

Its subcellular location is the cell membrane. This is Ly6/PLAUR domain-containing protein 4 (Lypd4) from Mus musculus (Mouse).